The primary structure comprises 358 residues: MQQIMLMCRPGFETEAGQELMDSAAACGLFGYFQPIRNAGLVRFTLGGPESAFELMQRIPLDELVFVRDWFLVIGDCPLPARDRVGAVIEFLRGADWQGSLASRLETRLTETNEDRDLGNFARKWVAPLSRGLREADMLAQDSASAKGDRLELLLLDFETAVVGLSLADNRSPFPQGIPRLRLPASAPSRSALKLEEAWKVFIPEDRYLDYLGGGRKAVDLGAAPGGWTWQLVQQGMMVTAVDNGPMNPELMATGHVEHVRADGYAWRPKRAVDWMVCDIVDKPRKTARLALDWVGGKLCRYTVFNLKLPMKKRYEEWLICRDILLQGLAEAELNCRLRARHLYHDREEITCFIERLD.

Residues Ser-191, 224-227, Asp-243, Asp-263, and Asp-279 contribute to the S-adenosyl-L-methionine site; that span reads APGG. Lys-308 acts as the Proton acceptor in catalysis.

It belongs to the class I-like SAM-binding methyltransferase superfamily. RNA methyltransferase RlmE family. RlmM subfamily. Monomer.

Its subcellular location is the cytoplasm. It catalyses the reaction cytidine(2498) in 23S rRNA + S-adenosyl-L-methionine = 2'-O-methylcytidine(2498) in 23S rRNA + S-adenosyl-L-homocysteine + H(+). Catalyzes the 2'-O-methylation at nucleotide C2498 in 23S rRNA. This chain is Ribosomal RNA large subunit methyltransferase M, found in Marinobacter nauticus (strain ATCC 700491 / DSM 11845 / VT8) (Marinobacter aquaeolei).